A 182-amino-acid chain; its full sequence is ATP-dependent protease subunit HslV (182 aa).

T10 is a catalytic residue. Na(+) contacts are provided by A166, C169, and S172.

It belongs to the peptidase T1B family. HslV subfamily. A double ring-shaped homohexamer of HslV is capped on each side by a ring-shaped HslU homohexamer. The assembly of the HslU/HslV complex is dependent on binding of ATP.

It localises to the cytoplasm. It carries out the reaction ATP-dependent cleavage of peptide bonds with broad specificity.. With respect to regulation, allosterically activated by HslU binding. Functionally, protease subunit of a proteasome-like degradation complex believed to be a general protein degrading machinery. The chain is ATP-dependent protease subunit HslV from Rickettsia africae (strain ESF-5).